A 170-amino-acid polypeptide reads, in one-letter code: Adenine phosphoribosyltransferase (170 aa).

This sequence belongs to the purine/pyrimidine phosphoribosyltransferase family. In terms of assembly, homodimer.

It is found in the cytoplasm. It catalyses the reaction AMP + diphosphate = 5-phospho-alpha-D-ribose 1-diphosphate + adenine. The protein operates within purine metabolism; AMP biosynthesis via salvage pathway; AMP from adenine: step 1/1. Functionally, catalyzes a salvage reaction resulting in the formation of AMP, that is energically less costly than de novo synthesis. In Clostridioides difficile (strain 630) (Peptoclostridium difficile), this protein is Adenine phosphoribosyltransferase.